The chain runs to 495 residues: Phenylalanine--tRNA ligase alpha subunit (495 aa).

L-phenylalanine-binding positions include Thr-338, 377–379 (QLE), and Tyr-417. Glu-419 contributes to the Mg(2+) binding site. Residue Phe-442 participates in L-phenylalanine binding.

It belongs to the class-II aminoacyl-tRNA synthetase family. Phe-tRNA synthetase alpha subunit type 2 subfamily. In terms of assembly, tetramer of two alpha and two beta subunits. Mg(2+) serves as cofactor.

The protein resides in the cytoplasm. It catalyses the reaction tRNA(Phe) + L-phenylalanine + ATP = L-phenylalanyl-tRNA(Phe) + AMP + diphosphate + H(+). In Methanosarcina mazei (strain ATCC BAA-159 / DSM 3647 / Goe1 / Go1 / JCM 11833 / OCM 88) (Methanosarcina frisia), this protein is Phenylalanine--tRNA ligase alpha subunit.